Consider the following 312-residue polypeptide: Ribosomal RNA small subunit methyltransferase H (312 aa).

S-adenosyl-L-methionine is bound by residues 33-35 (GGY), Asp51, Phe78, Asp97, and Gln104.

It belongs to the methyltransferase superfamily. RsmH family.

It localises to the cytoplasm. The catalysed reaction is cytidine(1402) in 16S rRNA + S-adenosyl-L-methionine = N(4)-methylcytidine(1402) in 16S rRNA + S-adenosyl-L-homocysteine + H(+). Its function is as follows. Specifically methylates the N4 position of cytidine in position 1402 (C1402) of 16S rRNA. The sequence is that of Ribosomal RNA small subunit methyltransferase H from Orientia tsutsugamushi (strain Boryong) (Rickettsia tsutsugamushi).